The following is a 449-amino-acid chain: UDP-N-acetylmuramoylalanine--D-glutamate ligase (449 aa).

118–124 is a binding site for ATP; the sequence is GTNGKTT.

This sequence belongs to the MurCDEF family.

The protein localises to the cytoplasm. It catalyses the reaction UDP-N-acetyl-alpha-D-muramoyl-L-alanine + D-glutamate + ATP = UDP-N-acetyl-alpha-D-muramoyl-L-alanyl-D-glutamate + ADP + phosphate + H(+). The protein operates within cell wall biogenesis; peptidoglycan biosynthesis. Functionally, cell wall formation. Catalyzes the addition of glutamate to the nucleotide precursor UDP-N-acetylmuramoyl-L-alanine (UMA). In Staphylococcus aureus (strain Mu3 / ATCC 700698), this protein is UDP-N-acetylmuramoylalanine--D-glutamate ligase.